The primary structure comprises 29 residues: Potassium channel toxin alpha-KTx 8.3 (29 aa).

3 cysteine pairs are disulfide-bonded: cysteine 3–cysteine 19, cysteine 6–cysteine 24, and cysteine 10–cysteine 26.

It belongs to the short scorpion toxin superfamily. Potassium channel inhibitor family. Alpha-KTx 08 subfamily. Expressed by the venom gland.

The protein localises to the secreted. In terms of biological role, specific and potent inhibitor of ClC-2/CLCN2 chloride channel. It slows ClC-2/CLCN2 activation by increasing the latency to first opening by nearly 8-fold but is unable to inhibit open channels, suggesting that this toxin inhibits channel activation gating. This Leiurus hebraeus (Hebrew deathstalker scorpion) protein is Potassium channel toxin alpha-KTx 8.3.